A 480-amino-acid polypeptide reads, in one-letter code: ATP synthase subunit beta 1 (480 aa).

Glycine 154–threonine 161 contributes to the ATP binding site.

The protein belongs to the ATPase alpha/beta chains family. As to quaternary structure, F-type ATPases have 2 components, CF(1) - the catalytic core - and CF(0) - the membrane proton channel. CF(1) has five subunits: alpha(3), beta(3), gamma(1), delta(1), epsilon(1). CF(0) has four main subunits: a(1), b(1), b'(1) and c(9-12).

It is found in the cell inner membrane. It catalyses the reaction ATP + H2O + 4 H(+)(in) = ADP + phosphate + 5 H(+)(out). In terms of biological role, produces ATP from ADP in the presence of a proton gradient across the membrane. The catalytic sites are hosted primarily by the beta subunits. The polypeptide is ATP synthase subunit beta 1 (Bradyrhizobium sp. (strain BTAi1 / ATCC BAA-1182)).